We begin with the raw amino-acid sequence, 382 residues long: Mannitol-1-phosphate 5-dehydrogenase (382 aa).

3–14 (ALHFGAGNIGRG) contacts NAD(+).

This sequence belongs to the mannitol dehydrogenase family.

It carries out the reaction D-mannitol 1-phosphate + NAD(+) = beta-D-fructose 6-phosphate + NADH + H(+). This Cronobacter sakazakii (strain ATCC BAA-894) (Enterobacter sakazakii) protein is Mannitol-1-phosphate 5-dehydrogenase.